The sequence spans 428 residues: Flotillin-2 (428 aa).

S-palmitoyl cysteine attachment occurs at residues Cys-4, Cys-19, and Cys-20.

This sequence belongs to the band 7/mec-2 family. Flotillin subfamily. In terms of assembly, heterooligomeric complex of flotillins 1 and 2. Palmitoylation may be required for the formation of higher order complexes and for neurite outgrowth in cultured neural stem cells. In terms of tissue distribution, normally expressed in growing retinal exons of newly differentiated ganglion cells at the retinal margin. After optic nerve injury, expressed in all retinal ganglion cells and retinal axons. Also expressed in endothelial cells, spinal cord, larval and adult skin, muscle processes, thymus and gill macrophages.

It localises to the membrane. Its subcellular location is the endosome. Functionally, may play a role in axon growth and regeneration. May be involved in epidermal cell adhesion and epidermal structure and function. The polypeptide is Flotillin-2 (flot2) (Carassius auratus (Goldfish)).